A 538-amino-acid chain; its full sequence is Chaperonin GroEL 1 (538 aa).

Residues 29–32, 86–90, G413, 478–480, and D494 each bind ATP; these read TLGP, DGTTT, and NAA.

This sequence belongs to the chaperonin (HSP60) family. As to quaternary structure, forms a cylinder of 14 subunits composed of two heptameric rings stacked back-to-back. Interacts with the co-chaperonin GroES.

The protein localises to the cytoplasm. It carries out the reaction ATP + H2O + a folded polypeptide = ADP + phosphate + an unfolded polypeptide.. Functionally, together with its co-chaperonin GroES, plays an essential role in assisting protein folding. The GroEL-GroES system forms a nano-cage that allows encapsulation of the non-native substrate proteins and provides a physical environment optimized to promote and accelerate protein folding. In Corynebacterium glutamicum (strain R), this protein is Chaperonin GroEL 1.